The primary structure comprises 275 residues: Ribosomal RNA small subunit methyltransferase A (275 aa).

S-adenosyl-L-methionine is bound by residues asparagine 21, leucine 23, glycine 48, glutamate 69, aspartate 94, and asparagine 115.

Belongs to the class I-like SAM-binding methyltransferase superfamily. rRNA adenine N(6)-methyltransferase family. RsmA subfamily.

Its subcellular location is the cytoplasm. It catalyses the reaction adenosine(1518)/adenosine(1519) in 16S rRNA + 4 S-adenosyl-L-methionine = N(6)-dimethyladenosine(1518)/N(6)-dimethyladenosine(1519) in 16S rRNA + 4 S-adenosyl-L-homocysteine + 4 H(+). Its function is as follows. Specifically dimethylates two adjacent adenosines (A1518 and A1519) in the loop of a conserved hairpin near the 3'-end of 16S rRNA in the 30S particle. May play a critical role in biogenesis of 30S subunits. The chain is Ribosomal RNA small subunit methyltransferase A from Clostridium botulinum (strain ATCC 19397 / Type A).